We begin with the raw amino-acid sequence, 149 residues long: Early lymphoid activation gene protein (149 aa).

Expressed in heart, kidney, lung, and skeletal muscle, with lower levels in pancreas and liver.

Functionally, may function as an early signal that helps mediate the activation of T-cells. In Homo sapiens (Human), this protein is Early lymphoid activation gene protein (DIAPH2-AS1).